A 228-amino-acid chain; its full sequence is 7-cyano-7-deazaguanine synthase (228 aa).

10-20 (FSGGQDSTTLA) is a binding site for ATP. Zn(2+) is bound by residues cysteine 190, cysteine 205, cysteine 208, and cysteine 211.

Belongs to the QueC family. Requires Zn(2+) as cofactor.

It catalyses the reaction 7-carboxy-7-deazaguanine + NH4(+) + ATP = 7-cyano-7-deazaguanine + ADP + phosphate + H2O + H(+). The protein operates within purine metabolism; 7-cyano-7-deazaguanine biosynthesis. Catalyzes the ATP-dependent conversion of 7-carboxy-7-deazaguanine (CDG) to 7-cyano-7-deazaguanine (preQ(0)). In Helicobacter pylori (strain HPAG1), this protein is 7-cyano-7-deazaguanine synthase.